The primary structure comprises 102 residues: Parathymosin (102 aa).

Residues M1–A102 form a disordered region. S2 carries the N-acetylserine modification. The residue at position 2 (S2) is a Phosphoserine. K4 bears the N6-acetyllysine mark. A phosphoserine mark is found at S5 and S13. The span at S13 to V37 shows a compositional bias: basic and acidic residues. The residue at position 15 (K15) is an N6-acetyllysine. The segment covering V38–G76 has biased composition (acidic residues). At T52 the chain carries Phosphothreonine. At K92 the chain carries N6-acetyllysine.

The protein belongs to the pro/parathymosin family.

In terms of biological role, parathymosin may mediate immune function by blocking the effect of prothymosin alpha which confers resistance to certain opportunistic infections. This is Parathymosin (PTMS) from Homo sapiens (Human).